The sequence spans 279 residues: tRNA (guanine-N(1)-)-methyltransferase (279 aa).

Residues Gly132 and Ile152–Leu157 each bind S-adenosyl-L-methionine.

Belongs to the RNA methyltransferase TrmD family. Homodimer.

The protein resides in the cytoplasm. The catalysed reaction is guanosine(37) in tRNA + S-adenosyl-L-methionine = N(1)-methylguanosine(37) in tRNA + S-adenosyl-L-homocysteine + H(+). In terms of biological role, specifically methylates guanosine-37 in various tRNAs. This chain is tRNA (guanine-N(1)-)-methyltransferase, found in Saccharophagus degradans (strain 2-40 / ATCC 43961 / DSM 17024).